The chain runs to 360 residues: Phosphoserine aminotransferase (360 aa).

Residue Arg-42 participates in L-glutamate binding. Pyridoxal 5'-phosphate is bound by residues 76 to 77 (AS), Trp-102, Thr-152, Asp-172, and Gln-195. Lys-196 bears the N6-(pyridoxal phosphate)lysine mark. 237 to 238 (NT) is a pyridoxal 5'-phosphate binding site.

Belongs to the class-V pyridoxal-phosphate-dependent aminotransferase family. SerC subfamily. In terms of assembly, homodimer. Pyridoxal 5'-phosphate serves as cofactor.

Its subcellular location is the cytoplasm. It catalyses the reaction O-phospho-L-serine + 2-oxoglutarate = 3-phosphooxypyruvate + L-glutamate. It carries out the reaction 4-(phosphooxy)-L-threonine + 2-oxoglutarate = (R)-3-hydroxy-2-oxo-4-phosphooxybutanoate + L-glutamate. Its pathway is amino-acid biosynthesis; L-serine biosynthesis; L-serine from 3-phospho-D-glycerate: step 2/3. Functionally, catalyzes the reversible conversion of 3-phosphohydroxypyruvate to phosphoserine and of 3-hydroxy-2-oxo-4-phosphonooxybutanoate to phosphohydroxythreonine. This Bacillus cereus (strain ZK / E33L) protein is Phosphoserine aminotransferase.